We begin with the raw amino-acid sequence, 295 residues long: Acetylglutamate kinase (295 aa).

Residues 66–67, Arg-88, and Asn-193 each bind substrate; that span reads GG.

The protein belongs to the acetylglutamate kinase family. ArgB subfamily.

The protein resides in the cytoplasm. The catalysed reaction is N-acetyl-L-glutamate + ATP = N-acetyl-L-glutamyl 5-phosphate + ADP. Its pathway is amino-acid biosynthesis; L-arginine biosynthesis; N(2)-acetyl-L-ornithine from L-glutamate: step 2/4. Catalyzes the ATP-dependent phosphorylation of N-acetyl-L-glutamate. The polypeptide is Acetylglutamate kinase (Sinorhizobium medicae (strain WSM419) (Ensifer medicae)).